Here is a 362-residue protein sequence, read N- to C-terminus: Endopolygalacturonase II (362 aa).

Residues Met1 to Ala21 form the signal peptide. A propeptide spanning residues Ser22–Arg27 is cleaved from the precursor. Cys30 and Cys45 form a disulfide bridge. The stretch at Ala156–Asn186 is one PbH1 1 repeat. Residue Asp201 is the Proton donor of the active site. Cys203 and Cys219 are oxidised to a cystine. His223 is an active-site residue. PbH1 repeat units lie at residues Val238–Thr259, Val267–Gln289, and Thr301–Ala322. The N-linked (GlcNAc...) (high mannose) asparagine glycan is linked to Asn240. 2 disulfide bridges follow: Cys329/Cys334 and Cys353/Cys362.

It belongs to the glycosyl hydrolase 28 family.

The protein resides in the secreted. The catalysed reaction is (1,4-alpha-D-galacturonosyl)n+m + H2O = (1,4-alpha-D-galacturonosyl)n + (1,4-alpha-D-galacturonosyl)m.. Functionally, involved in maceration and soft-rotting of plant tissue. Hydrolyzes the 1,4-alpha glycosidic bonds of de-esterified pectate in the smooth region of the plant cell wall. The polypeptide is Endopolygalacturonase II (Aspergillus niger).